A 97-amino-acid polypeptide reads, in one-letter code: UPF0125 protein plu3376 (97 aa).

It belongs to the UPF0125 (RnfH) family.

The sequence is that of UPF0125 protein plu3376 from Photorhabdus laumondii subsp. laumondii (strain DSM 15139 / CIP 105565 / TT01) (Photorhabdus luminescens subsp. laumondii).